The following is a 368-amino-acid chain: N-acetylneuraminate epimerase (368 aa).

The N-terminal stretch at 1 to 19 (MNKTITALAIMMASFAANA) is a signal peptide. 7 Kelch repeats span residues 40–84 (TVYI…AFID), 86–137 (NLYV…FVHN), 139–173 (KAYVTGGVNQNIFNGYFEDLNEAGKDSTAVDKINA), 174–219 (YYFD…VNKG), 222–265 (TWLI…VAGG), 287–336 (ENYQ…PWNN), and 338–367 (LLIIGGETAGGKAVTDSVLISVKDNKVTVQ). Glu-228 acts as the Proton acceptor in catalysis.

It belongs to the NanM family. Homodimer.

It is found in the periplasm. It catalyses the reaction N-acetyl-alpha-neuraminate = N-acetyl-beta-neuraminate. In terms of biological role, converts alpha-N-acetylneuranimic acid (Neu5Ac) to the beta-anomer, accelerating the equilibrium between the alpha- and beta-anomers. Probably facilitates sialidase-negative bacteria to compete successfully for limited amounts of extracellular Neu5Ac, which is likely taken up in the beta-anomer. In addition, the rapid removal of sialic acid from solution might be advantageous to the bacterium to damp down host responses. In Shigella boydii serotype 4 (strain Sb227), this protein is N-acetylneuraminate epimerase.